A 445-amino-acid polypeptide reads, in one-letter code: Phosphoglucosamine mutase (445 aa).

Residue Ser-99 is the Phosphoserine intermediate of the active site. Residues Ser-99, Asp-242, Asp-244, and Asp-246 each coordinate Mg(2+). Phosphoserine is present on Ser-99.

This sequence belongs to the phosphohexose mutase family. Mg(2+) is required as a cofactor. In terms of processing, activated by phosphorylation.

The enzyme catalyses alpha-D-glucosamine 1-phosphate = D-glucosamine 6-phosphate. In terms of biological role, catalyzes the conversion of glucosamine-6-phosphate to glucosamine-1-phosphate. The sequence is that of Phosphoglucosamine mutase from Campylobacter jejuni subsp. jejuni serotype O:2 (strain ATCC 700819 / NCTC 11168).